Reading from the N-terminus, the 300-residue chain is Ubiquitin carboxyl-terminal hydrolase 2 (300 aa).

Positions 2–220 constitute a UCH catalytic domain; it reads SWTTIESDAG…IRFNLMVICK (219 aa). C83 serves as the catalytic Nucleophile. H159 serves as the catalytic Proton donor. The 30-residue stretch at 261 to 290 folds into the ULD domain; sequence NFVGLFVELSKLLVKDRIDKNTWNSTLETA.

This sequence belongs to the peptidase C12 family. Component of the 26S proteasome. Interacts with rpn10.

The protein resides in the nucleus. It catalyses the reaction Thiol-dependent hydrolysis of ester, thioester, amide, peptide and isopeptide bonds formed by the C-terminal Gly of ubiquitin (a 76-residue protein attached to proteins as an intracellular targeting signal).. Functionally, ubiquitin-protein hydrolase is involved both in the processing of ubiquitin precursors and of ubiquitinated proteins. This enzyme is a thiol protease that recognizes and hydrolyzes a peptide bond at the C-terminal glycine of ubiquitin. The polypeptide is Ubiquitin carboxyl-terminal hydrolase 2 (uch2) (Schizosaccharomyces pombe (strain 972 / ATCC 24843) (Fission yeast)).